The following is a 513-amino-acid chain: Bifunctional purine biosynthesis protein PurH (513 aa).

An MGS-like domain is found at Met1–Thr144.

It belongs to the PurH family.

The catalysed reaction is (6R)-10-formyltetrahydrofolate + 5-amino-1-(5-phospho-beta-D-ribosyl)imidazole-4-carboxamide = 5-formamido-1-(5-phospho-D-ribosyl)imidazole-4-carboxamide + (6S)-5,6,7,8-tetrahydrofolate. The enzyme catalyses IMP + H2O = 5-formamido-1-(5-phospho-D-ribosyl)imidazole-4-carboxamide. It participates in purine metabolism; IMP biosynthesis via de novo pathway; 5-formamido-1-(5-phospho-D-ribosyl)imidazole-4-carboxamide from 5-amino-1-(5-phospho-D-ribosyl)imidazole-4-carboxamide (10-formyl THF route): step 1/1. Its pathway is purine metabolism; IMP biosynthesis via de novo pathway; IMP from 5-formamido-1-(5-phospho-D-ribosyl)imidazole-4-carboxamide: step 1/1. The sequence is that of Bifunctional purine biosynthesis protein PurH from Lactobacillus acidophilus (strain ATCC 700396 / NCK56 / N2 / NCFM).